Here is a 720-residue protein sequence, read N- to C-terminus: Photosystem I P700 chlorophyll a apoprotein A1 (720 aa).

The next 8 helical transmembrane spans lie at isoleucine 62–alanine 85, leucine 148–histidine 171, leucine 186–leucine 210, isoleucine 282–tyrosine 300, tryptophan 337–tyrosine 360, leucine 376–valine 402, alanine 424–histidine 446, and phenylalanine 522–leucine 540. Residues cysteine 564 and cysteine 573 each coordinate [4Fe-4S] cluster. 2 helical membrane-spanning segments follow: residues histidine 580–tryptophan 601 and leucine 655–phenylalanine 677. Histidine 666 lines the chlorophyll a' pocket. Residues methionine 674 and tyrosine 682 each coordinate chlorophyll a. Tryptophan 683 contacts phylloquinone. Residues alanine 715–histidine 720 form a helical membrane-spanning segment.

This sequence belongs to the PsaA/PsaB family. In terms of assembly, the PsaA/B heterodimer binds the P700 chlorophyll special pair and subsequent electron acceptors. PSI consists of a core antenna complex that captures photons, and an electron transfer chain that converts photonic excitation into a charge separation. The eukaryotic PSI reaction center is composed of at least 11 subunits. It depends on P700 is a chlorophyll a/chlorophyll a' dimer, A0 is one or more chlorophyll a, A1 is one or both phylloquinones and FX is a shared 4Fe-4S iron-sulfur center. as a cofactor.

It localises to the plastid. It is found in the chloroplast thylakoid membrane. The catalysed reaction is reduced [plastocyanin] + hnu + oxidized [2Fe-2S]-[ferredoxin] = oxidized [plastocyanin] + reduced [2Fe-2S]-[ferredoxin]. PsaA and PsaB bind P700, the primary electron donor of photosystem I (PSI), as well as the electron acceptors A0, A1 and FX. PSI is a plastocyanin-ferredoxin oxidoreductase, converting photonic excitation into a charge separation, which transfers an electron from the donor P700 chlorophyll pair to the spectroscopically characterized acceptors A0, A1, FX, FA and FB in turn. Oxidized P700 is reduced on the lumenal side of the thylakoid membrane by plastocyanin. The chain is Photosystem I P700 chlorophyll a apoprotein A1 from Ephedra tweediana (Vining horsetail).